The sequence spans 547 residues: MGDGNLKKSKLSWPKTLVKKWLNIKSKSEDFHADDLDRGEGGGDWRNNVIEREEACSVRKSKTETRSKRNSGRARRNKLDVDPPLDHLRVFTATWNVAGKSPPSYLNLDDWLHTSPPSDIYVLGFQEIVPLNAGNVLGTEDNGPARKWVSLIRRTLNSLPGGSCQTPSPVPHPVAELDSDFEGDSAAGANSLFYHRSRSMRMDASASSLPQQFDRRFSVCDRFMLGDTPDDFYDQSFRYCSSEDEPADSPCHDHYSPVSRTGSFVADDRDKGRDKSKYCLVASKQMVGIFLTVWVKSDLRDSVNNLKVSCVGRGLMGYLGNKGSISISMSVHQTSFCFVCSHLTSGQKEGDELRRNSDVLEILRKTRFPRVNNAGDDKSPQMISEHDRVIWLGDLNYRIALSYRSAKALVEMRDWRALLEKDQLRIEQRKGCVFEGWKEGTIYFPPTYKYSNNSDIYAGDDRLPKAKRRTPAWCDRILWHGSGISQLSYVRGESRFSDHRPVYSLFSVEIESAYRNRIKKSSSYTSSRIEVEELLPQRYGYSELNPY.

Positions 56–67 (CSVRKSKTETRS) are enriched in basic and acidic residues. The tract at residues 56–80 (CSVRKSKTETRSKRNSGRARRNKLD) is disordered. Catalytic stretches follow at residues 387 to 402 (DRVI…IALS) and 467 to 482 (KRRT…WHGS).

It belongs to the inositol polyphosphate 5-phosphatase family.

This chain is Type I inositol polyphosphate 5-phosphatase 4, found in Arabidopsis thaliana (Mouse-ear cress).